The following is a 712-amino-acid chain: Polyribonucleotide nucleotidyltransferase (712 aa).

D487 and D493 together coordinate Mg(2+). The region spanning 554-613 (PRIEVMNIPVDKIREVIGSGGKVIREIVEKTGAKINIEDDGTVKIASSSGKEIEAARKWI) is the KH domain. The 69-residue stretch at 623 to 691 (GQIYEGTVVK…ERGKVRLSMK (69 aa)) folds into the S1 motif domain.

This sequence belongs to the polyribonucleotide nucleotidyltransferase family. Mg(2+) is required as a cofactor.

It is found in the cytoplasm. It catalyses the reaction RNA(n+1) + phosphate = RNA(n) + a ribonucleoside 5'-diphosphate. In terms of biological role, involved in mRNA degradation. Catalyzes the phosphorolysis of single-stranded polyribonucleotides processively in the 3'- to 5'-direction. The polypeptide is Polyribonucleotide nucleotidyltransferase (Rhizobium etli (strain ATCC 51251 / DSM 11541 / JCM 21823 / NBRC 15573 / CFN 42)).